Reading from the N-terminus, the 496-residue chain is Probable CtpA-like serine protease (496 aa).

Residues 1–16 (MDDKQHTSSSDDERAE) are compositionally biased toward basic and acidic residues. The segment at 1 to 27 (MDDKQHTSSSDDERAEIATSNQDQETN) is disordered. Residues 18-27 (ATSNQDQETN) show a composition bias toward polar residues. Residues 39–59 (FISILIGTILITAVITVVAYI) form a helical membrane-spanning segment. Residues 124–206 (TKSFNEGVSG…TEVTLTVQRG (83 aa)) enclose the PDZ domain. Residues Ser329, Asp340, and Lys354 each act as charge relay system in the active site.

The protein belongs to the peptidase S41A family.

The protein localises to the cell membrane. The chain is Probable CtpA-like serine protease from Staphylococcus aureus (strain COL).